Reading from the N-terminus, the 584-residue chain is Levansucrase (584 aa).

Positions 1 to 30 are cleaved as a signal peptide; that stretch reads MAHVRRKVATLNMALAGSLLMVLGAQSALA. Q31 bears the Pyrrolidone carboxylic acid mark. Sucrose contacts are provided by W134, D135, S225, R308, and D309. The active-site Nucleophile is D135. C339 and C395 are joined by a disulfide. The Proton donor/acceptor role is filled by E401.

This sequence belongs to the glycosyl hydrolase 68 family. As to quaternary structure, monomer. The N-terminus is blocked. The N-terminal Gln is cyclized to a pyroglutamic acid.

The protein localises to the secreted. It carries out the reaction [6)-beta-D-fructofuranosyl-(2-&gt;](n) alpha-D-glucopyranoside + sucrose = [6)-beta-D-fructofuranosyl-(2-&gt;](n+1) alpha-D-glucopyranoside + D-glucose. With respect to regulation, strongly inhibited by Hg(2+) and slightly activated by Co(2+). Not inhibited by the metal ion chelator EDTA, suggesting that this enzyme does not need a metal cofactor. Catalyzes the synthesis of levan, a fructose polymer, by transferring the fructosyl moiety from sucrose to a growing acceptor molecule. Also displays sucrose hydrolase activity. In vitro, catalyzes transfructosylation from sucrose to a variety of acceptors including water (sucrose hydrolysis), glucose (exchange reaction), fructan (polymerase reaction) and sucrose (oligofructoside synthesis). Levansucrase of G.diazotrophicus SRT4, unlike the enzyme of B.subtilis, causes accumulation of large quantities of tri- and tetrasaccharides but small quantities of high-molecular-mass levan. It may act more as a sucrose hydrolase than as a fructan polymerase, and may be the key enzyme in the sucrose metabolism of G.diazotrophicus SRT4. This Gluconacetobacter diazotrophicus (Acetobacter diazotrophicus) protein is Levansucrase.